The sequence spans 655 residues: Phosphatidylinositol-3,5-bisphosphate 3-phosphatase MTMR6 (655 aa).

A GRAM domain is found at 1–101 (MEHIRTTKVE…YNSLLQLSKQ (101 aa)). Residues 2 to 141 (EHIRTTKVEQ…AEYERMGVPN (140 aa)) are interaction with RAB1B. Phosphotyrosine is present on Tyr108. Residues 124 to 537 (GWQLIDLAAE…FNFKFWRNMY (414 aa)) enclose the Myotubularin phosphatase domain. A 1,2-diacyl-sn-glycero-3-phospho-(1D-myo-inositol-3,5-bisphosphate)-binding residues include Asn286, Asn311, and Ile312. A 1,2-diacyl-sn-glycero-3-phospho-(1D-myo-inositol-3-phosphate) is bound by residues Asn286, Asn311, and Ile312. Catalysis depends on Cys374, which acts as the Phosphocysteine intermediate. Positions 375, 376, 377, 378, 379, 380, 416, and 420 each coordinate a 1,2-diacyl-sn-glycero-3-phospho-(1D-myo-inositol-3,5-bisphosphate). 6 residues coordinate a 1,2-diacyl-sn-glycero-3-phospho-(1D-myo-inositol-3-phosphate): Ser375, Asp376, Gly377, Trp378, Asp379, and Arg380. Arg420 serves as a coordination point for a 1,2-diacyl-sn-glycero-3-phospho-(1D-myo-inositol-3-phosphate). The stretch at 547–581 (RQSVLNIIMNMNEQNKQLEEDVKDLEAKIKQCKSG) forms a coiled coil. 3 positions are modified to phosphoserine: Ser595, Ser623, and Ser645.

It belongs to the protein-tyrosine phosphatase family. Non-receptor class myotubularin subfamily. As to quaternary structure, homodimer. Heterodimer (via C-terminus) with MTMR9 (via C-terminus). Interacts with ALKBH4. Interacts with KCNN4. Interacts (via GRAM domain) with RAB1B (in GDP-bound form); the interaction regulates MTMR6 recruitment to the endoplasmic reticulum-Golgi intermediate compartment.

It is found in the cytoplasm. It localises to the endoplasmic reticulum. The protein localises to the cell projection. The protein resides in the ruffle membrane. Its subcellular location is the endoplasmic reticulum-Golgi intermediate compartment. It is found in the perinuclear region. It carries out the reaction a 1,2-diacyl-sn-glycero-3-phospho-(1D-myo-inositol-3,5-bisphosphate) + H2O = a 1,2-diacyl-sn-glycero-3-phospho-(1D-myo-inositol-5-phosphate) + phosphate. It catalyses the reaction a 1,2-diacyl-sn-glycero-3-phospho-(1D-myo-inositol-3-phosphate) + H2O = a 1,2-diacyl-sn-glycero-3-phospho-(1D-myo-inositol) + phosphate. The enzyme catalyses 1,2-dioctanoyl-sn-glycero-3-phospho-(1D-myo-inositol-3,5-bisphosphate) + H2O = 1,2-dioctanoyl-sn-glycero-3-phospho-(1D-myo-inositol-5-phosphate) + phosphate. The catalysed reaction is 1,2-dioctanoyl-sn-glycero-3-phospho-(1-D-myo-inositol-3-phosphate) + H2O = 1,2-dioctanoyl-sn-glycero-3-phospho-(1D-myo-inositol) + phosphate. With respect to regulation, allosterically activated by phosphatidylserine and/or phosphatidylinositol 4-phosphate (PtdIns(4)P), and phosphatidylinositol 5-phosphate (PtdIns(5)P). Interaction with MTMR9 increases catalytic activity towards phosphatidylinositol 3,5-bisphosphate. Functionally, lipid phosphatase that specifically dephosphorylates the D-3 position of phosphatidylinositol 3-phosphate and phosphatidylinositol 3,5-bisphosphate, generating phosphatidylinositol and phosphatidylinositol 5-phosphate. Binds with high affinity to phosphatidylinositol 3,5-bisphosphate (PtdIns(3,5)P2) but also to phosphatidylinositol 3-phosphate (PtdIns(3)P), phosphatidylinositol 4-phosphate (PtdIns(4)P), and phosphatidylinositol 5-phosphate (PtdIns(5)P), phosphatidic acid and phosphatidylserine. Negatively regulates ER-Golgi protein transport. Probably in association with MTMR9, plays a role in the late stages of macropinocytosis by dephosphorylating phosphatidylinositol 3-phosphate in membrane ruffles. Acts as a negative regulator of KCNN4/KCa3.1 channel activity in CD4(+) T-cells possibly by decreasing intracellular levels of phosphatidylinositol 3-phosphate. Negatively regulates proliferation of reactivated CD4(+) T-cells. In complex with MTMR9, negatively regulates DNA damage-induced apoptosis. The formation of the MTMR6-MTMR9 complex stabilizes both MTMR6 and MTMR9 protein levels. This Rattus norvegicus (Rat) protein is Phosphatidylinositol-3,5-bisphosphate 3-phosphatase MTMR6.